A 533-amino-acid polypeptide reads, in one-letter code: Solute carrier family 2, facilitated glucose transporter member 2 (533 aa).

Topologically, residues 1 to 17 (MDGKSKMQAEKHLTGTL) are cytoplasmic. Residues 18 to 38 (VLSVFTAVLGFFQYGYSLGVI) traverse the membrane as a helical segment. Residues 39 to 110 (NAPQKVIEAH…SPHILTMYWS (72 aa)) lie on the Extracellular side of the membrane. N-linked (GlcNAc...) asparagine glycosylation is found at asparagine 64 and asparagine 69. Residues 111–131 (LSVSMFAVGGMVSSFTVGWIG) form a helical membrane-spanning segment. The Cytoplasmic segment spans residues 132–136 (DRLGR). Residues 137-157 (VKAMLVVNVLSIAGNLLMGLA) traverse the membrane as a helical segment. Over 158-163 (KMGPSH) the chain is Extracellular. The helical transmembrane segment at 164-184 (ILIIAGRAITGLYCGLSSGLV) threads the bilayer. Residues 185–199 (PMYVSEVSPTALRGA) are Cytoplasmic-facing. The chain crosses the membrane as a helical span at residues 200 to 220 (LGTLHQLAIVTGILISQVLGL). Glutamine 205 lines the D-glucose pocket. The Extracellular portion of the chain corresponds to 221 to 229 (DFLLGNDEL). The chain crosses the membrane as a helical span at residues 230–250 (WPLLLGLSGVAALLQFFLLLL). Topologically, residues 251–315 (CPESPRYLYI…LFSSSKYRQA (65 aa)) are cytoplasmic. The helical transmembrane segment at 316-336 (VIVALMVQISQQFSGINAIFY) threads the bilayer. Residues 326 to 327 (QQ) and asparagine 332 each bind D-glucose. Topologically, residues 337–350 (YSTNIFQRAGVGQP) are extracellular. Residues 351–371 (VYATIGVGVVNTVFTVISVFL) traverse the membrane as a helical segment. Asparagine 361 is a D-glucose binding site. Over 372–379 (VEKAGRRS) the chain is Cytoplasmic. Residues 380-400 (LFLAGLMGMLISAVAMTVGLV) form a helical membrane-spanning segment. The Extracellular portion of the chain corresponds to 401–413 (LLSQFAWMSYVSM). Residues 414-434 (VAIFLFVIFFEVGPGPIPWFI) form a helical membrane-spanning segment. D-glucose contacts are provided by glutamate 424 and tryptophan 432. The Cytoplasmic segment spans residues 435–445 (VAELFSQGPRP). The helical transmembrane segment at 446 to 466 (AAIAVAGFCNWACNFIVGMCF) threads the bilayer. Residues 467-471 (QYIAD) lie on the Extracellular side of the membrane. A helical transmembrane segment spans residues 472-492 (LCGPYVFVVFAVLLLVFFLFA). The Cytoplasmic portion of the chain corresponds to 493–533 (YLKVPETKGKSFEEIAAAFRRKKLPAKSMTELEDLRGGEEA).

The protein belongs to the major facilitator superfamily. Sugar transporter (TC 2.A.1.1) family. Glucose transporter subfamily.

The protein resides in the cell membrane. The catalysed reaction is D-glucose(out) = D-glucose(in). It carries out the reaction D-fructose(out) = D-fructose(in). It catalyses the reaction L-dehydroascorbate(out) = L-dehydroascorbate(in). The enzyme catalyses D-galactose(in) = D-galactose(out). Its activity is regulated as follows. D-glucose and maltose competitively inhibit fructose transport. D-glucose, D-fructose and maltose inhibit deoxyglucose transport. Functionally, facilitative hexose transporter that mediates the transport of glucose, fructose and galactose. Likely mediates the bidirectional transfer of glucose across the plasma membrane of hepatocytes and is responsible for uptake of glucose by the beta cells. The protein is Solute carrier family 2, facilitated glucose transporter member 2 of Gallus gallus (Chicken).